Reading from the N-terminus, the 869-residue chain is Aconitate hydratase B (869 aa).

Substrate is bound by residues R191, 244 to 246 (SSR), 417 to 419 (QDT), and S501. [4Fe-4S] cluster-binding residues include C713, C772, and C775. Substrate is bound by residues R794 and R799.

This sequence belongs to the aconitase/IPM isomerase family. Monomer. [4Fe-4S] cluster serves as cofactor.

It carries out the reaction citrate = D-threo-isocitrate. It catalyses the reaction (2S,3R)-3-hydroxybutane-1,2,3-tricarboxylate = 2-methyl-cis-aconitate + H2O. It functions in the pathway carbohydrate metabolism; tricarboxylic acid cycle; isocitrate from oxaloacetate: step 2/2. The protein operates within organic acid metabolism; propanoate degradation. Functionally, involved in the catabolism of short chain fatty acids (SCFA) via the tricarboxylic acid (TCA)(acetyl degradation route) and probably via the 2-methylcitrate cycle I (propionate degradation route). Catalyzes the reversible isomerization of citrate to isocitrate via cis-aconitate. Catalyzes the hydration of 2-methyl-cis-aconitate to yield (2R,3S)-2-methylisocitrate. The apo form of AcnB functions as a RNA-binding regulatory protein. This is Aconitate hydratase B (acnB) from Pseudomonas aeruginosa (strain ATCC 15692 / DSM 22644 / CIP 104116 / JCM 14847 / LMG 12228 / 1C / PRS 101 / PAO1).